Reading from the N-terminus, the 656-residue chain is UvrABC system protein B (656 aa).

One can recognise a Helicase ATP-binding domain in the interval 29-414 (KLSEFKTKQQ…SLSQNNVIEQ (386 aa)). 42–49 (GATGTGKT) contributes to the ATP binding site. Positions 95-118 (YFDFYQPEAYLPSKGIYIEKSATV) match the Beta-hairpin motif. The Helicase C-terminal domain maps to 434–596 (QVEDLIEEII…KTPKTVVKPL (163 aa)). The 36-residue stretch at 614–649 (AALIKQLTKEMKKAAANQNYELAIEIRDSIFELEKE) folds into the UVR domain.

It belongs to the UvrB family. As to quaternary structure, forms a heterotetramer with UvrA during the search for lesions. Interacts with UvrC in an incision complex.

The protein resides in the cytoplasm. The UvrABC repair system catalyzes the recognition and processing of DNA lesions. A damage recognition complex composed of 2 UvrA and 2 UvrB subunits scans DNA for abnormalities. Upon binding of the UvrA(2)B(2) complex to a putative damaged site, the DNA wraps around one UvrB monomer. DNA wrap is dependent on ATP binding by UvrB and probably causes local melting of the DNA helix, facilitating insertion of UvrB beta-hairpin between the DNA strands. Then UvrB probes one DNA strand for the presence of a lesion. If a lesion is found the UvrA subunits dissociate and the UvrB-DNA preincision complex is formed. This complex is subsequently bound by UvrC and the second UvrB is released. If no lesion is found, the DNA wraps around the other UvrB subunit that will check the other stand for damage. This is UvrABC system protein B from Mycoplasma genitalium (strain ATCC 33530 / DSM 19775 / NCTC 10195 / G37) (Mycoplasmoides genitalium).